The primary structure comprises 286 residues: Phosphatidylglycerol--prolipoprotein diacylglyceryl transferase (286 aa).

A run of 4 helical transmembrane segments spans residues 25-45 (WYALAYIAGIVIGWLYARMLL), 65-85 (FILWVTIGIILGGRTGYVLFY), 103-123 (GGMSFHGGFMGCVAAVVLFGW), and 127-147 (VPILSLGDITCAVGPIGLFLG). Residue arginine 148 participates in a 1,2-diacyl-sn-glycero-3-phospho-(1'-sn-glycerol) binding. 3 helical membrane-spanning segments follow: residues 188–208 (AGLEGIGLFVILALMIRAGAL), 212–232 (GLIIGAFLTFYGLARITGEFF), and 248–268 (MGMLLSIPMVIVGILVMITTW).

It belongs to the Lgt family.

Its subcellular location is the cell inner membrane. The enzyme catalyses L-cysteinyl-[prolipoprotein] + a 1,2-diacyl-sn-glycero-3-phospho-(1'-sn-glycerol) = an S-1,2-diacyl-sn-glyceryl-L-cysteinyl-[prolipoprotein] + sn-glycerol 1-phosphate + H(+). Its pathway is protein modification; lipoprotein biosynthesis (diacylglyceryl transfer). Its function is as follows. Catalyzes the transfer of the diacylglyceryl group from phosphatidylglycerol to the sulfhydryl group of the N-terminal cysteine of a prolipoprotein, the first step in the formation of mature lipoproteins. This Rhodopseudomonas palustris (strain ATCC BAA-98 / CGA009) protein is Phosphatidylglycerol--prolipoprotein diacylglyceryl transferase.